Here is a 340-residue protein sequence, read N- to C-terminus: Fructoselysine 6-phosphate deglycase (340 aa).

SIS domains follow at residues 35–169 and 201–331; these read IVEE…RLAP and LGEL…PDER.

Homododecamer.

It catalyses the reaction N(6)-(6-phospho-D-fructosyl)-L-lysine + H2O = D-glucose 6-phosphate + L-lysine. It participates in carbohydrate metabolism; fructoselysine degradation; D-glucose 6-phosphate and lysine from fructoselysine: step 2/2. Strongly inhibited by ZnCl(2). Catalyzes the reversible conversion of fructoselysine 6-phosphate to glucose 6-phosphate and lysine. Functions in a fructoselysine degradation pathway that allows E.coli to grow on fructoselysine or psicoselysine. This Escherichia coli (strain K12) protein is Fructoselysine 6-phosphate deglycase.